The sequence spans 221 residues: Proteasome subunit beta type-1 (221 aa).

Belongs to the peptidase T1B family. In terms of assembly, the 26S proteasome consists of a 20S proteasome core and two 19S regulatory subunits. The 20S proteasome core is composed of 28 subunits that are arranged in four stacked rings, resulting in a barrel-shaped structure. The two end rings are each formed by seven alpha subunits, and the two central rings are each formed by seven beta subunits. The catalytic chamber with the active sites is on the inside of the barrel.

Its subcellular location is the cytoplasm. The protein localises to the nucleus. In terms of biological role, non-catalytic component of the proteasome, a multicatalytic proteinase complex which is characterized by its ability to cleave peptides with Arg, Phe, Tyr, Leu, and Glu adjacent to the leaving group at neutral or slightly basic pH. The proteasome has an ATP-dependent proteolytic activity. The chain is Proteasome subunit beta type-1 (PBF1) from Oryza sativa subsp. japonica (Rice).